A 586-amino-acid polypeptide reads, in one-letter code: Acetylcholinesterase (586 aa).

An N-terminal signal peptide occupies residues 1–21 (MNLLVTSSLGVLLHLVVLCQA). Asparagine 80 is a glycosylation site (N-linked (GlcNAc...) asparagine). Residues cysteine 88 and cysteine 115 are joined by a disulfide bond. Serine 221 serves as the catalytic Acyl-ester intermediate. Cysteine 275 and cysteine 286 are disulfide-bonded. Glutamate 348 serves as the catalytic Charge relay system. A disulfide bridge connects residues cysteine 423 and cysteine 542. The N-linked (GlcNAc...) asparagine glycan is linked to asparagine 437. The active-site Charge relay system is the histidine 461. N-linked (GlcNAc...) asparagine glycans are attached at residues asparagine 478 and asparagine 554. Serine 564 is lipidated: GPI-anchor amidated serine. A propeptide spans 565–586 (SGTSSSKGIIFYVLFSILYLIF) (removed in mature form).

It belongs to the type-B carboxylesterase/lipase family. In terms of assembly, isoform H form is a homodimer; the asymmetric form is a disulfide-bonded oligomer composed of a collagenic subunit (Q) and a variable number of T catalytic subunits. An interchain disulfide bond is present in what becomes position 593 of the T isoform. In terms of tissue distribution, found in the synapses and to a lower extent in extrajunctional areas of muscle and nerve, and on erythrocyte membranes.

It localises to the cell membrane. The protein localises to the synapse. The enzyme catalyses acetylcholine + H2O = choline + acetate + H(+). Inhibited by substrate concentrations above 0.5 mM. Terminates signal transduction at the neuromuscular junction by rapid hydrolysis of the acetylcholine released into the synaptic cleft. May be involved in cell-cell interactions. The chain is Acetylcholinesterase (ache) from Tetronarce californica (Pacific electric ray).